The sequence spans 311 residues: Methionyl-tRNA formyltransferase (311 aa).

The interval 33–52 is disordered; the sequence is RPDRPAGRGRHQRSSPVREL. 110–113 is a (6S)-5,6,7,8-tetrahydrofolate binding site; it reads SLLP.

It belongs to the Fmt family.

The catalysed reaction is L-methionyl-tRNA(fMet) + (6R)-10-formyltetrahydrofolate = N-formyl-L-methionyl-tRNA(fMet) + (6S)-5,6,7,8-tetrahydrofolate + H(+). Its function is as follows. Attaches a formyl group to the free amino group of methionyl-tRNA(fMet). The formyl group appears to play a dual role in the initiator identity of N-formylmethionyl-tRNA by promoting its recognition by IF2 and preventing the misappropriation of this tRNA by the elongation apparatus. This chain is Methionyl-tRNA formyltransferase, found in Parafrankia sp. (strain EAN1pec).